The following is a 300-amino-acid chain: GTPase Era (300 aa).

An Era-type G domain is found at 7-175 (KSGFAVMAGL…KTAVAETLPF (169 aa)). Positions 15–22 (GLPNAGKS) are G1. GTP is bound at residue 15–22 (GLPNAGKS). The G2 stretch occupies residues 41–45 (QMTRQ). Residues 62-65 (DTPG) are G3. GTP-binding positions include 62 to 66 (DTPGF) and 124 to 127 (NKAD). A G4 region spans residues 124–127 (NKAD). The interval 154 to 156 (ISA) is G5. The region spanning 198–283 (IREQIFNLYE…RLELEVSVEP (86 aa)) is the KH type-2 domain.

Belongs to the TRAFAC class TrmE-Era-EngA-EngB-Septin-like GTPase superfamily. Era GTPase family. Monomer.

The protein resides in the cytoplasm. The protein localises to the cell inner membrane. In terms of biological role, an essential GTPase that binds both GDP and GTP, with rapid nucleotide exchange. Plays a role in 16S rRNA processing and 30S ribosomal subunit biogenesis and possibly also in cell cycle regulation and energy metabolism. The sequence is that of GTPase Era from Elusimicrobium minutum (strain Pei191).